We begin with the raw amino-acid sequence, 256 residues long: uncharacterized protein (256 aa).

Positions 1 to 24 are cleaved as a signal peptide; sequence MIKRVNKLVLGISLLFLVISITAG. A lipid anchor (N-palmitoyl cysteine) is attached at Cys25. The S-diacylglycerol cysteine moiety is linked to residue Cys25.

It belongs to the staphylococcal tandem lipoprotein family.

Its subcellular location is the cell membrane. This is an uncharacterized protein from Staphylococcus aureus (strain MW2).